The primary structure comprises 430 residues: Adenylosuccinate synthetase (430 aa).

GTP-binding positions include 12 to 18 (GDEGKGK) and 40 to 42 (GHT). Residue Asp13 is the Proton acceptor of the active site. Residues Asp13 and Gly40 each coordinate Mg(2+). IMP-binding positions include 13–16 (DEGK), 38–41 (NAGH), Thr128, Arg142, Gln223, Thr238, and Arg302. His41 serves as the catalytic Proton donor. Residue 298 to 304 (TTTGRPR) coordinates substrate. GTP contacts are provided by residues Arg304, 330–332 (SID), and 412–414 (SVG).

This sequence belongs to the adenylosuccinate synthetase family. As to quaternary structure, homodimer. Requires Mg(2+) as cofactor.

Its subcellular location is the cytoplasm. The enzyme catalyses IMP + L-aspartate + GTP = N(6)-(1,2-dicarboxyethyl)-AMP + GDP + phosphate + 2 H(+). The protein operates within purine metabolism; AMP biosynthesis via de novo pathway; AMP from IMP: step 1/2. Functionally, plays an important role in the de novo pathway of purine nucleotide biosynthesis. Catalyzes the first committed step in the biosynthesis of AMP from IMP. This chain is Adenylosuccinate synthetase, found in Enterococcus faecalis (strain ATCC 700802 / V583).